The primary structure comprises 68 residues: Medusin-AS (68 aa).

A signal peptide spans 1–22; that stretch reads MAFLKKSLFLVLFLGLVSLSVC. A propeptide spanning residues 23–49 is cleaved from the precursor; that stretch reads EEEKRESEEEKNEQEEDDRDERSEEKR. Residues 24–46 form a disordered region; that stretch reads EEKRESEEEKNEQEEDDRDERSE. Positions 31–41 are enriched in acidic residues; sequence EEKNEQEEDDR. The residue at position 67 (Leu-67) is a Leucine amide.

This sequence belongs to the frog skin active peptide (FSAP) family. Medusin subfamily. In terms of tissue distribution, expressed by the skin glands.

The protein localises to the secreted. Its function is as follows. Antimicrobial peptide active against Gram-positive bacteria and fungi but inactive against Gram-negative bacteria. Also inhibits growth of B.dendrobatidis zoospores at high concentrations. Shows anticancer activities. Shows hemolytic activity. The sequence is that of Medusin-AS from Agalychnis spurrelli (Gliding leaf frog).